Reading from the N-terminus, the 564-residue chain is Septation ring formation regulator EzrA (564 aa).

Topologically, residues 1-4 are extracellular; it reads MVLF. The helical transmembrane segment at 5–23 threads the bilayer; sequence IILAILVVILIAIGVLFYM. The Cytoplasmic segment spans residues 24–564; the sequence is RSNKRNLIEK…KHIEEQVIKE (541 aa). Coiled-coil stretches lie at residues 84 to 126, 165 to 223, 271 to 303, and 350 to 435; these read VEEK…HQVT, EAAE…LIRE, MISR…YEVK, and VRQF…RRLL.

The protein belongs to the EzrA family.

The protein localises to the cell membrane. Negative regulator of FtsZ ring formation; modulates the frequency and position of FtsZ ring formation. Inhibits FtsZ ring formation at polar sites. Interacts either with FtsZ or with one of its binding partners to promote depolymerization. In Staphylococcus epidermidis (strain ATCC 35984 / DSM 28319 / BCRC 17069 / CCUG 31568 / BM 3577 / RP62A), this protein is Septation ring formation regulator EzrA.